Consider the following 130-residue polypeptide: Small ribosomal subunit protein uS12c (130 aa).

It belongs to the universal ribosomal protein uS12 family. Part of the 30S ribosomal subunit.

The protein localises to the plastid. It is found in the chloroplast. Functionally, with S4 and S5 plays an important role in translational accuracy. Located at the interface of the 30S and 50S subunits. The polypeptide is Small ribosomal subunit protein uS12c (rps12) (Tetradesmus obliquus (Green alga)).